Reading from the N-terminus, the 331-residue chain is Aspartate carbamoyltransferase catalytic subunit (331 aa).

Arg55 and Thr56 together coordinate carbamoyl phosphate. Residue Lys84 coordinates L-aspartate. Positions 105, 133, and 136 each coordinate carbamoyl phosphate. Residues Arg166 and Arg229 each coordinate L-aspartate. The carbamoyl phosphate site is built by Leu268 and Pro269.

This sequence belongs to the aspartate/ornithine carbamoyltransferase superfamily. ATCase family. As to quaternary structure, heterododecamer (2C3:3R2) of six catalytic PyrB chains organized as two trimers (C3), and six regulatory PyrI chains organized as three dimers (R2).

The catalysed reaction is carbamoyl phosphate + L-aspartate = N-carbamoyl-L-aspartate + phosphate + H(+). Its pathway is pyrimidine metabolism; UMP biosynthesis via de novo pathway; (S)-dihydroorotate from bicarbonate: step 2/3. Functionally, catalyzes the condensation of carbamoyl phosphate and aspartate to form carbamoyl aspartate and inorganic phosphate, the committed step in the de novo pyrimidine nucleotide biosynthesis pathway. The protein is Aspartate carbamoyltransferase catalytic subunit of Alkaliphilus oremlandii (strain OhILAs) (Clostridium oremlandii (strain OhILAs)).